A 126-amino-acid chain; its full sequence is Glycine cleavage system H protein (126 aa).

Positions 24–106 constitute a Lipoyl-binding domain; the sequence is TVTVGITDHA…YGEGWMYRIK (83 aa). N6-lipoyllysine is present on Lys65.

It belongs to the GcvH family. The glycine cleavage system is composed of four proteins: P, T, L and H. It depends on (R)-lipoate as a cofactor.

The glycine cleavage system catalyzes the degradation of glycine. The H protein shuttles the methylamine group of glycine from the P protein to the T protein. The sequence is that of Glycine cleavage system H protein from Psychrobacter sp. (strain PRwf-1).